The primary structure comprises 241 residues: Venom nerve growth factor (241 aa).

An N-terminal signal peptide occupies residues 1 to 18; that stretch reads MSMLCYTLIIAFLIGIWA. Positions 19-122 are excised as a propeptide; the sequence is APKSEDNVPL…SLNRNIRAKR (104 aa). 3 disulfides stabilise this stretch: Cys136–Cys201, Cys179–Cys229, and Cys189–Cys231. Residue Asn145 is glycosylated (N-linked (GlcNAc...) asparagine).

This sequence belongs to the NGF-beta family. In terms of assembly, homodimer; non-covalently linked. Expressed by the venom gland.

The protein localises to the secreted. In terms of biological role, nerve growth factor is important for the development and maintenance of the sympathetic and sensory nervous systems. It stimulates division and differentiation of sympathetic and embryonic sensory neurons as well as basal forebrain cholinergic neurons in the brain. Its relevance in the snake venom is not clear. However, it has been shown to inhibit metalloproteinase-dependent proteolysis of platelet glycoprotein Ib alpha, suggesting a metalloproteinase inhibition to prevent metalloprotease autodigestion and/or protection against prey proteases. Binds a lipid between the two protein chains in the homodimer. The lipid-bound form promotes histamine relase from mouse mast cells, contrary to the lipid-free form. The sequence is that of Venom nerve growth factor from Crotalus durissus terrificus (South American rattlesnake).